We begin with the raw amino-acid sequence, 276 residues long: Formamidopyrimidine-DNA glycosylase (276 aa).

Residue proline 2 is the Schiff-base intermediate with DNA of the active site. The Proton donor role is filled by glutamate 3. Catalysis depends on lysine 58, which acts as the Proton donor; for beta-elimination activity. Histidine 92, arginine 111, and lysine 154 together coordinate DNA. The FPG-type zinc-finger motif lies at 239-273; that stretch reads QVYGHAGEECNNCGTILEKIKVNGRGTTFCPHCQV. The Proton donor; for delta-elimination activity role is filled by arginine 263.

The protein belongs to the FPG family. In terms of assembly, monomer. Zn(2+) is required as a cofactor.

The catalysed reaction is Hydrolysis of DNA containing ring-opened 7-methylguanine residues, releasing 2,6-diamino-4-hydroxy-5-(N-methyl)formamidopyrimidine.. It catalyses the reaction 2'-deoxyribonucleotide-(2'-deoxyribose 5'-phosphate)-2'-deoxyribonucleotide-DNA = a 3'-end 2'-deoxyribonucleotide-(2,3-dehydro-2,3-deoxyribose 5'-phosphate)-DNA + a 5'-end 5'-phospho-2'-deoxyribonucleoside-DNA + H(+). Involved in base excision repair of DNA damaged by oxidation or by mutagenic agents. Acts as a DNA glycosylase that recognizes and removes damaged bases. Has a preference for oxidized purines, such as 7,8-dihydro-8-oxoguanine (8-oxoG). Has AP (apurinic/apyrimidinic) lyase activity and introduces nicks in the DNA strand. Cleaves the DNA backbone by beta-delta elimination to generate a single-strand break at the site of the removed base with both 3'- and 5'-phosphates. The sequence is that of Formamidopyrimidine-DNA glycosylase from Lactobacillus johnsonii (strain CNCM I-12250 / La1 / NCC 533).